We begin with the raw amino-acid sequence, 168 residues long: Photosystem I assembly protein Ycf3 (168 aa).

TPR repeat units lie at residues 35-68 (AFTY…EIDP), 72-105 (SYIL…NPFL), and 120-153 (GEQA…TPGN).

It belongs to the Ycf3 family.

The protein localises to the plastid. It localises to the chloroplast thylakoid membrane. Essential for the assembly of the photosystem I (PSI) complex. May act as a chaperone-like factor to guide the assembly of the PSI subunits. This Buxus microphylla (Littleleaf boxwood) protein is Photosystem I assembly protein Ycf3.